The primary structure comprises 213 residues: dITP/XTP pyrophosphatase (213 aa).

S17 to K22 provides a ligand contact to substrate. The Mg(2+) site is built by E49 and D78. The Proton acceptor role is filled by D78. Substrate-binding positions include S79, F164 to D167, K187, and H192 to R193.

It belongs to the HAM1 NTPase family. In terms of assembly, homodimer. It depends on Mg(2+) as a cofactor.

The enzyme catalyses XTP + H2O = XMP + diphosphate + H(+). It catalyses the reaction dITP + H2O = dIMP + diphosphate + H(+). It carries out the reaction ITP + H2O = IMP + diphosphate + H(+). Functionally, pyrophosphatase that catalyzes the hydrolysis of nucleoside triphosphates to their monophosphate derivatives, with a high preference for the non-canonical purine nucleotides XTP (xanthosine triphosphate), dITP (deoxyinosine triphosphate) and ITP. Seems to function as a house-cleaning enzyme that removes non-canonical purine nucleotides from the nucleotide pool, thus preventing their incorporation into DNA/RNA and avoiding chromosomal lesions. The polypeptide is dITP/XTP pyrophosphatase (Bordetella bronchiseptica (strain ATCC BAA-588 / NCTC 13252 / RB50) (Alcaligenes bronchisepticus)).